The sequence spans 549 residues: Glucose-6-phosphate isomerase (549 aa).

Residue glutamate 355 is the Proton donor of the active site. Active-site residues include histidine 386 and lysine 514.

This sequence belongs to the GPI family.

The protein localises to the cytoplasm. It catalyses the reaction alpha-D-glucose 6-phosphate = beta-D-fructose 6-phosphate. It functions in the pathway carbohydrate biosynthesis; gluconeogenesis. It participates in carbohydrate degradation; glycolysis; D-glyceraldehyde 3-phosphate and glycerone phosphate from D-glucose: step 2/4. Its function is as follows. Catalyzes the reversible isomerization of glucose-6-phosphate to fructose-6-phosphate. In Klebsiella pneumoniae subsp. pneumoniae (strain ATCC 700721 / MGH 78578), this protein is Glucose-6-phosphate isomerase.